The sequence spans 157 residues: Putative pre-16S rRNA nuclease (157 aa).

This sequence belongs to the YqgF nuclease family.

The protein resides in the cytoplasm. Functionally, could be a nuclease involved in processing of the 5'-end of pre-16S rRNA. In Ruegeria sp. (strain TM1040) (Silicibacter sp.), this protein is Putative pre-16S rRNA nuclease.